The following is a 513-amino-acid chain: Arabinoxylan arabinofuranohydrolase (513 aa).

An N-terminal signal peptide occupies residues 1–26 (MRKKCSVCLWILVLLLSCLSGKSAYA). D50 acts as the Proton acceptor in catalysis. Catalysis depends on E251, which acts as the Proton donor. Residue N314 participates in substrate binding. The CBM6 domain maps to 382–511 (NRVEAETFAW…LFNFDYWQFT (130 aa)). 5 residues coordinate Ca(2+): E385, E387, N409, Q410, and D506.

It localises to the secreted. The catalysed reaction is Hydrolysis of terminal non-reducing alpha-L-arabinofuranoside residues in alpha-L-arabinosides.. Its pathway is glycan degradation; xylan degradation. In terms of biological role, cleaves arabinose units from O-2- or O-3-monosubstituted xylose residues, thereby assisting in arabinoxylan (AX) and short-chain arabinoxylo-oligosaccharide (AXOS) degradation. Is more active on wheat bran AXOS than on wheat water-extractable AX and rye water-extractable AX. Does not display endoxylanase, xylosidase or arabinanase activity. This chain is Arabinoxylan arabinofuranohydrolase (xynD), found in Bacillus subtilis (strain 168).